The following is a 548-amino-acid chain: Eukaryotic translation initiation factor 3 subunit D (548 aa).

N6-acetyllysine is present on Lys-53. Ser-161 carries the post-translational modification Phosphoserine. The segment at 285-299 (DFDLLTVSETANEPP) is RNA gate. The interval 523–548 (PDGTFSSDEDEEEEEEEEEEEEEEET) is disordered. A phosphoserine mark is found at Ser-528 and Ser-529. Positions 529–548 (SDEDEEEEEEEEEEEEEEET) are enriched in acidic residues.

This sequence belongs to the eIF-3 subunit D family. In terms of assembly, component of the eukaryotic translation initiation factor 3 (eIF-3) complex, which is composed of 13 subunits: EIF3A, EIF3B, EIF3C, EIF3D, EIF3E, EIF3F, EIF3G, EIF3H, EIF3I, EIF3J, EIF3K, EIF3L and EIF3M. The eIF-3 complex appears to include 3 stable modules: module A is composed of EIF3A, EIF3B, EIF3G and EIF3I; module B is composed of EIF3F, EIF3H, and EIF3M; and module C is composed of EIF3C, EIF3D, EIF3E, EIF3K and EIF3L. EIF3C of module C binds EIF3B of module A and EIF3H of module B, thereby linking the three modules. EIF3J is a labile subunit that binds to the eIF-3 complex via EIF3B. The eIF-3 complex interacts with RPS6KB1 under conditions of nutrient depletion. Mitogenic stimulation leads to binding and activation of a complex composed of MTOR and RPTOR, leading to phosphorylation and release of RPS6KB1 and binding of EIF4B to eIF-3. (Microbial infection) Interacts with Norwalk virus VPg protein.

It is found in the cytoplasm. Functionally, mRNA cap-binding component of the eukaryotic translation initiation factor 3 (eIF-3) complex, a complex required for several steps in the initiation of protein synthesis of a specialized repertoire of mRNAs. The eIF-3 complex associates with the 40S ribosome and facilitates the recruitment of eIF-1, eIF-1A, eIF-2:GTP:methionyl-tRNAi and eIF-5 to form the 43S pre-initiation complex (43S PIC). The eIF-3 complex stimulates mRNA recruitment to the 43S PIC and scanning of the mRNA for AUG recognition. The eIF-3 complex is also required for disassembly and recycling of post-termination ribosomal complexes and subsequently prevents premature joining of the 40S and 60S ribosomal subunits prior to initiation. The eIF-3 complex specifically targets and initiates translation of a subset of mRNAs involved in cell proliferation, including cell cycling, differentiation and apoptosis, and uses different modes of RNA stem-loop binding to exert either translational activation or repression. In the eIF-3 complex, EIF3D specifically recognizes and binds the 7-methylguanosine cap of a subset of mRNAs. In terms of biological role, (Microbial infection) In case of FCV infection, plays a role in the ribosomal termination-reinitiation event leading to the translation of VP2. The sequence is that of Eukaryotic translation initiation factor 3 subunit D from Homo sapiens (Human).